We begin with the raw amino-acid sequence, 384 residues long: MAKHLFTSESVSEGHPDKIADQISDAVLDAILEQDPKARVACETYVKTGMVMVGGEITTSAWVDIEELTRETVREIGYVHSDMGFDANSCAVLNTIGKQSPDINQGVDKADPKEQGAGDQGIMFGYACNETEVLMPAPITYAHRLMERQAKVRKDGTLPWLRPDAKSQVTFQYEQGKIVGIDAVVLSTQHCDSISTPDLREAVMEEIIKPVLPSEWLNKETKYFINPTGRFVIGGPMGDCGLTGRKIIVDTYGGAARHGGGAFSGKDPSKVDRSAAYAARYVAKNIVAAGMADRCEIQLSYAIGVADPTSIMVETFGTEKVSHDIIIEAVRQFFDLRPYGLQEMLNLLQPIYKKTAAYGHFGREEFPWEATDKAALLREFAGIK.

Histidine 15 is a binding site for ATP. Aspartate 17 serves as a coordination point for Mg(2+). Residue glutamate 43 participates in K(+) binding. L-methionine-binding residues include glutamate 56 and glutamine 99. Residues 99–109 (QSPDINQGVDK) form a flexible loop region. ATP contacts are provided by residues 164 to 166 (DAK), 230 to 231 (RF), aspartate 239, 245 to 246 (RK), alanine 262, and lysine 266. Aspartate 239 serves as a coordination point for L-methionine. L-methionine is bound at residue lysine 270.

Belongs to the AdoMet synthase family. As to quaternary structure, homotetramer; dimer of dimers. Mg(2+) is required as a cofactor. It depends on K(+) as a cofactor.

It localises to the cytoplasm. It catalyses the reaction L-methionine + ATP + H2O = S-adenosyl-L-methionine + phosphate + diphosphate. It functions in the pathway amino-acid biosynthesis; S-adenosyl-L-methionine biosynthesis; S-adenosyl-L-methionine from L-methionine: step 1/1. In terms of biological role, catalyzes the formation of S-adenosylmethionine (AdoMet) from methionine and ATP. The overall synthetic reaction is composed of two sequential steps, AdoMet formation and the subsequent tripolyphosphate hydrolysis which occurs prior to release of AdoMet from the enzyme. This chain is S-adenosylmethionine synthase, found in Vibrio vulnificus (strain YJ016).